Reading from the N-terminus, the 461-residue chain is MKKLWGGRFQKTPEKWVDEFGASISFDQNLVAEDITGSLAHAAMLKKCGILTAEEELKIREGLNTLLQKAEEGALEFSVDYEDIHLNIEKMLIDEIGPLGGKLHTGRSRNDQVATDMHLYLKNHVGHIIELIEAFQSALIEKAEANVETILPGYTHLQRAQPISFAHHLLAYFWMLERDKERFQDSMKRINKSPLGCGALAGTTFPIDRDYSAELLGFDAIYENSLDGVSDRDFILEFLSNSSMLMMHLSRFSEEIILWCSQEFKFIELDDTYATGSSMMPQKKNPDMAELIRGKTGRVYGDMMGLFTIMKGLPLAYNKDLQEDKEGMFDTVKTVEGSLQIFTGMIQTMTVNKDVMKQATKQDFSNATELADYLAKKGMPFREAHEVVGKLVYTCIERGIYLSDMPFGEFQQASTLFEEDIYTVLDPYYAVEKRMSAGGTGFKQVEQALEKAKACVAAGVC.

The protein belongs to the lyase 1 family. Argininosuccinate lyase subfamily.

It is found in the cytoplasm. The enzyme catalyses 2-(N(omega)-L-arginino)succinate = fumarate + L-arginine. It functions in the pathway amino-acid biosynthesis; L-arginine biosynthesis; L-arginine from L-ornithine and carbamoyl phosphate: step 3/3. The polypeptide is Argininosuccinate lyase (Bacillus subtilis (strain 168)).